The sequence spans 197 residues: Holliday junction branch migration complex subunit RuvA (197 aa).

The segment at 1–64 (MYDYIKGIYK…DDSINLYGFF (64 aa)) is domain I. The segment at 65-143 (TEEERDMFNL…NDDIISDIDD (79 aa)) is domain II. The interval 144 to 154 (LDSISNFQLHS) is flexible linker. Residues 154 to 197 (SAEALEALMSLGYSQKESEKALKNVDKENSLEDIIKACLKYLMG) are domain III.

Belongs to the RuvA family. As to quaternary structure, homotetramer. Forms an RuvA(8)-RuvB(12)-Holliday junction (HJ) complex. HJ DNA is sandwiched between 2 RuvA tetramers; dsDNA enters through RuvA and exits via RuvB. An RuvB hexamer assembles on each DNA strand where it exits the tetramer. Each RuvB hexamer is contacted by two RuvA subunits (via domain III) on 2 adjacent RuvB subunits; this complex drives branch migration. In the full resolvosome a probable DNA-RuvA(4)-RuvB(12)-RuvC(2) complex forms which resolves the HJ.

Its subcellular location is the cytoplasm. Functionally, the RuvA-RuvB-RuvC complex processes Holliday junction (HJ) DNA during genetic recombination and DNA repair, while the RuvA-RuvB complex plays an important role in the rescue of blocked DNA replication forks via replication fork reversal (RFR). RuvA specifically binds to HJ cruciform DNA, conferring on it an open structure. The RuvB hexamer acts as an ATP-dependent pump, pulling dsDNA into and through the RuvAB complex. HJ branch migration allows RuvC to scan DNA until it finds its consensus sequence, where it cleaves and resolves the cruciform DNA. The chain is Holliday junction branch migration complex subunit RuvA from Clostridium tetani (strain Massachusetts / E88).